The primary structure comprises 95 residues: Co-chaperonin GroES (95 aa).

This sequence belongs to the GroES chaperonin family. In terms of assembly, heptamer of 7 subunits arranged in a ring. Interacts with the chaperonin GroEL.

It localises to the cytoplasm. Functionally, together with the chaperonin GroEL, plays an essential role in assisting protein folding. The GroEL-GroES system forms a nano-cage that allows encapsulation of the non-native substrate proteins and provides a physical environment optimized to promote and accelerate protein folding. GroES binds to the apical surface of the GroEL ring, thereby capping the opening of the GroEL channel. The chain is Co-chaperonin GroES from Chlorobium phaeobacteroides (strain BS1).